Consider the following 177-residue polypeptide: Endothelin-2 (177 aa).

A signal peptide spans Met-1–Ala-23. Positions Ala-24 to Thr-45 are excised as a propeptide. Disulfide bonds link Cys-48/Cys-62 and Cys-50/Cys-58. A propeptide spanning residues Val-69 to Arg-177 is cleaved from the precursor. The interval Cys-95–His-110 is endothelin-like. The tract at residues His-155–Arg-177 is disordered.

This sequence belongs to the endothelin/sarafotoxin family. As to expression, expressed in various organs including heart, lung, liver, kidney, gastrointestinal tract, uterus and ovary, but not in spleen. Within the gastrointestinal tract, gene expression was detected in rumen, a ruminant-specific digestive organ, as well as stomach, duodenum and colon.

The protein localises to the secreted. Functionally, endothelins are endothelium-derived vasoconstrictor peptides. The chain is Endothelin-2 (EDN2) from Bos taurus (Bovine).